We begin with the raw amino-acid sequence, 472 residues long: MKQEVILVLDCGATNVRAIAVNRQGKIVARASTPNASDIAMENNTWHQWSLDAILQRFADCCRQINSELTECHIRGIAVTTFGVDGALVDKQGNLLYPIISWKCPRTAAVMDNIERLISAQRLQAISGVGAFSFNTLYKLVWLKENHPQLLERAHAWLFISSLINHRLTGEFTTDITMAGTSQMLDIQQRDFSPQILQATGIPRRLFPRLVEAGEQIGTLQNSAAAMLGLPVGIPVISAGHDTQFALFGAGAEQNEPVLSSGTWEILMVRSAQVDTSLLSQYAGSTCELDSQAGLYNPGMQWLASGVLEWVRKLFWTAETPWQMLIEEARLIAPGADGVKMQCDLLSCQNAGWQGVTLNTTRGHFYRAALEGLTAQLQRNLQMLEKIGHFKASELLLVGGGSRNTLWNQIKANMLDIPLKVLDDAETTVAGAALFGWYGVGEFNSPEEARAQIHYQFRYFYPQTEPEFIEEV.

It belongs to the FGGY kinase family. Requires a divalent metal cation as cofactor.

It carries out the reaction L-fuculose + ATP = L-fuculose 1-phosphate + ADP + H(+). Its pathway is carbohydrate degradation; L-fucose degradation; L-lactaldehyde and glycerone phosphate from L-fucose: step 2/3. Its function is as follows. Catalyzes the phosphorylation of L-fuculose. This chain is L-fuculokinase, found in Escherichia coli O157:H7.